The primary structure comprises 193 residues: Interferon type A3 (193 aa).

Residues 1–31 form the signal peptide; sequence MAVPASPQHPRGYGILLLTLLLKALATTASA. 3 cysteine pairs are disulfide-bonded: Cys32-Cys129, Cys61-Cys155, and Cys68-Cys168. 4 N-linked (GlcNAc...) asparagine glycosylation sites follow: Asn65, Asn71, Asn108, and Asn186.

It belongs to the alpha/beta interferon family.

Its subcellular location is the secreted. Functionally, has antiviral activities. In Gallus gallus (Chicken), this protein is Interferon type A3 (IFNA3).